Here is a 427-residue protein sequence, read N- to C-terminus: Glutamate-1-semialdehyde 2,1-aminomutase (427 aa).

K265 bears the N6-(pyridoxal phosphate)lysine mark.

The protein belongs to the class-III pyridoxal-phosphate-dependent aminotransferase family. HemL subfamily. In terms of assembly, homodimer. Pyridoxal 5'-phosphate serves as cofactor.

The protein resides in the cytoplasm. The enzyme catalyses (S)-4-amino-5-oxopentanoate = 5-aminolevulinate. It participates in porphyrin-containing compound metabolism; protoporphyrin-IX biosynthesis; 5-aminolevulinate from L-glutamyl-tRNA(Glu): step 2/2. This is Glutamate-1-semialdehyde 2,1-aminomutase from Pseudomonas putida (strain GB-1).